We begin with the raw amino-acid sequence, 338 residues long: Lipoate-protein ligase A (338 aa).

The BPL/LPL catalytic domain maps to 29 to 216 (PATQRVLFLW…AFFAHYGERI (188 aa)). Residues R71, 76 to 79 (GAVF), and K134 each bind ATP. K134 lines the (R)-lipoate pocket.

Belongs to the LplA family. As to quaternary structure, monomer.

The protein resides in the cytoplasm. The catalysed reaction is L-lysyl-[lipoyl-carrier protein] + (R)-lipoate + ATP = N(6)-[(R)-lipoyl]-L-lysyl-[lipoyl-carrier protein] + AMP + diphosphate + H(+). The protein operates within protein modification; protein lipoylation via exogenous pathway; protein N(6)-(lipoyl)lysine from lipoate: step 1/2. It functions in the pathway protein modification; protein lipoylation via exogenous pathway; protein N(6)-(lipoyl)lysine from lipoate: step 2/2. Catalyzes both the ATP-dependent activation of exogenously supplied lipoate to lipoyl-AMP and the transfer of the activated lipoyl onto the lipoyl domains of lipoate-dependent enzymes. The chain is Lipoate-protein ligase A from Salmonella typhi.